The sequence spans 162 residues: 2-C-methyl-D-erythritol 2,4-cyclodiphosphate synthase (162 aa).

The a divalent metal cation site is built by Asp8 and His10. Residues 8 to 10 (DVH) and 36 to 37 (HS) each bind 4-CDP-2-C-methyl-D-erythritol 2-phosphate. His44 provides a ligand contact to a divalent metal cation. Residues 58-60 (DIG), 63-67 (FPDTD), 102-108 (AQAPKMA), 134-137 (TTTE), Phe141, and Arg144 each bind 4-CDP-2-C-methyl-D-erythritol 2-phosphate.

It belongs to the IspF family. Homotrimer. A divalent metal cation is required as a cofactor.

It carries out the reaction 4-CDP-2-C-methyl-D-erythritol 2-phosphate = 2-C-methyl-D-erythritol 2,4-cyclic diphosphate + CMP. Its pathway is isoprenoid biosynthesis; isopentenyl diphosphate biosynthesis via DXP pathway; isopentenyl diphosphate from 1-deoxy-D-xylulose 5-phosphate: step 4/6. In terms of biological role, involved in the biosynthesis of isopentenyl diphosphate (IPP) and dimethylallyl diphosphate (DMAPP), two major building blocks of isoprenoid compounds. Catalyzes the conversion of 4-diphosphocytidyl-2-C-methyl-D-erythritol 2-phosphate (CDP-ME2P) to 2-C-methyl-D-erythritol 2,4-cyclodiphosphate (ME-CPP) with a corresponding release of cytidine 5-monophosphate (CMP). This is 2-C-methyl-D-erythritol 2,4-cyclodiphosphate synthase from Yersinia enterocolitica serotype O:8 / biotype 1B (strain NCTC 13174 / 8081).